The following is a 91-amino-acid chain: UPF0147 protein DKAM_0139 (91 aa).

Belongs to the UPF0147 family.

This is UPF0147 protein DKAM_0139 from Desulfurococcus amylolyticus (strain DSM 18924 / JCM 16383 / VKM B-2413 / 1221n) (Desulfurococcus kamchatkensis).